The sequence spans 300 residues: Protein CANDIDATE G-PROTEIN COUPLED RECEPTOR 2 (300 aa).

7 helical membrane passes run 37–57 (GFLH…YLAY), 73–93 (IMIA…AWCC), 110–130 (LTLF…AFLF), 152–172 (IGLD…PLFI), 183–203 (WGLW…IFFM), 222–242 (ITVM…TANG), and 245–265 (FGLW…LPLL).

Belongs to the UPF0359 family. Interacts with GPA1. As to expression, expressed at low levels in seedlings.

It localises to the cell membrane. Functionally, plays a role in plants and microbes interactions. G-protein coupled melatonin receptor involved in root growth mediated by the bacterial quorum-sensing signals N-acyl-homoserine lactones (AHLs). Binds to melatonin. Phytomelatonin receptor required, in collaboration with GPA1, for melatonin-mediated stomatal closure involving H(2)O(2) and Ca(2+) signals. Essential for melatonin-mediated plant response to osmotic stress probably by activating reactive oxygen species (ROS) scavenging ability. The chain is Protein CANDIDATE G-PROTEIN COUPLED RECEPTOR 2 from Arabidopsis thaliana (Mouse-ear cress).